The following is a 330-amino-acid chain: Catharanthine synthase (330 aa).

The short motif at 81 to 83 (HGA) is the Involved in the stabilization of the negatively charged intermediate by the formation of the oxyanion hole element. A catharanthine-binding site is contributed by G84. Residue S173 is the Proton acceptor of the active site. D274 is a catalytic residue. Catharanthine is bound at residue Y305. Y305 (proton donor/acceptor) is an active-site residue.

The protein belongs to the 'GDXG' lipolytic enzyme family. As to quaternary structure, interacts with dehydroprecondylocarpine acetate synthase (DPAS). In terms of tissue distribution, expressed in leaf epidermis.

It localises to the cytoplasm. It is found in the cytosol. The protein resides in the nucleus. It carries out the reaction dehydrosecodine = catharanthine. Its pathway is alkaloid biosynthesis. Component of iboga and aspidosperma monoterpenoid indole alkaloids (MIAs, e.g. tabersonine and catharanthine) biosynthesis pathway from 19E-geissoschizine, psychoactive compounds likely to be used in the treatment of opioid dependence. Catalyzes the conversion of dehydrosecodine to catharanthine. The polypeptide is Catharanthine synthase (Catharanthus roseus (Madagascar periwinkle)).